A 97-amino-acid polypeptide reads, in one-letter code: Signal recognition particle 19 kDa protein (97 aa).

The protein belongs to the SRP19 family. Part of the signal recognition particle protein translocation system, which is composed of SRP and FtsY. Archaeal SRP consists of a 7S RNA molecule of 300 nucleotides and two protein subunits: SRP54 and SRP19.

Its subcellular location is the cytoplasm. In terms of biological role, involved in targeting and insertion of nascent membrane proteins into the cytoplasmic membrane. Binds directly to 7S RNA and mediates binding of the 54 kDa subunit of the SRP. This is Signal recognition particle 19 kDa protein from Methanocella arvoryzae (strain DSM 22066 / NBRC 105507 / MRE50).